The sequence spans 504 residues: Protoporphyrinogen oxidase, mitochondrial (504 aa).

FAD-binding positions include 20–25 (GAGVSG), 43–44 (EA), Lys-51, and 65–68 (GANT). The interval 213 to 232 (SPKNEKKQGPPKTSANKKRQ) is disordered. Residues Val-264 and 473 to 475 (LSV) contribute to the FAD site.

The protein belongs to the protoporphyrinogen/coproporphyrinogen oxidase family. Protoporphyrinogen oxidase subfamily. FAD serves as cofactor.

It localises to the mitochondrion. The catalysed reaction is protoporphyrinogen IX + 3 O2 = protoporphyrin IX + 3 H2O2. Its pathway is porphyrin-containing compound metabolism; protoporphyrin-IX biosynthesis; protoporphyrin-IX from protoporphyrinogen-IX: step 1/1. Inhibited by the herbicide acifluorfen. In terms of biological role, catalyzes the 6-electron oxidation of protoporphyrinogen-IX to form protoporphyrin-IX. Its function is as follows. Provides precursor for the mitochondrial and plastidic heme synthesis and the predominant chlorophyll synthesis in plastids. This chain is Protoporphyrinogen oxidase, mitochondrial (PPXII), found in Nicotiana tabacum (Common tobacco).